Reading from the N-terminus, the 182-residue chain is UPF0301 protein NGK_1355 (182 aa).

The protein belongs to the UPF0301 (AlgH) family.

The sequence is that of UPF0301 protein NGK_1355 from Neisseria gonorrhoeae (strain NCCP11945).